A 159-amino-acid chain; its full sequence is Ribosomal RNA large subunit methyltransferase H (159 aa).

S-adenosyl-L-methionine contacts are provided by residues L76, G107, and 126–131 (LSKLTM).

Belongs to the RNA methyltransferase RlmH family. Homodimer.

It localises to the cytoplasm. The enzyme catalyses pseudouridine(1915) in 23S rRNA + S-adenosyl-L-methionine = N(3)-methylpseudouridine(1915) in 23S rRNA + S-adenosyl-L-homocysteine + H(+). Functionally, specifically methylates the pseudouridine at position 1915 (m3Psi1915) in 23S rRNA. The polypeptide is Ribosomal RNA large subunit methyltransferase H (Acinetobacter baumannii (strain SDF)).